We begin with the raw amino-acid sequence, 293 residues long: Ribosomal protein L11 methyltransferase (293 aa).

S-adenosyl-L-methionine contacts are provided by Thr145, Gly166, Asp188, and Asn230.

Belongs to the methyltransferase superfamily. PrmA family.

The protein localises to the cytoplasm. The catalysed reaction is L-lysyl-[protein] + 3 S-adenosyl-L-methionine = N(6),N(6),N(6)-trimethyl-L-lysyl-[protein] + 3 S-adenosyl-L-homocysteine + 3 H(+). Methylates ribosomal protein L11. The polypeptide is Ribosomal protein L11 methyltransferase (Shewanella putrefaciens (strain CN-32 / ATCC BAA-453)).